We begin with the raw amino-acid sequence, 510 residues long: NAD(P)H-quinone oxidoreductase subunit 2 B, chloroplastic (510 aa).

The next 13 membrane-spanning stretches (helical) occupy residues 24-44, 57-77, 99-119, 124-144, 149-169, 183-203, 227-247, 295-315, 323-343, 354-374, 392-412, 418-438, and 482-502; these read LLLF…GLIL, IPWL…ALLF, IFQF…VEYI, MAIT…MFLC, LITI…LSGY, YLLM…WLYG, PGIS…LSPA, WHLL…LIAI, MLAY…IVGD, YMLF…SFGL, AFLA…PPLA, LHLF…IGLL, and LSMI…NPII.

Belongs to the complex I subunit 2 family. NDH is composed of at least 16 different subunits, 5 of which are encoded in the nucleus.

Its subcellular location is the plastid. It localises to the chloroplast thylakoid membrane. It catalyses the reaction a plastoquinone + NADH + (n+1) H(+)(in) = a plastoquinol + NAD(+) + n H(+)(out). The catalysed reaction is a plastoquinone + NADPH + (n+1) H(+)(in) = a plastoquinol + NADP(+) + n H(+)(out). In terms of biological role, NDH shuttles electrons from NAD(P)H:plastoquinone, via FMN and iron-sulfur (Fe-S) centers, to quinones in the photosynthetic chain and possibly in a chloroplast respiratory chain. The immediate electron acceptor for the enzyme in this species is believed to be plastoquinone. Couples the redox reaction to proton translocation, and thus conserves the redox energy in a proton gradient. The sequence is that of NAD(P)H-quinone oxidoreductase subunit 2 B, chloroplastic from Morus indica (Mulberry).